A 151-amino-acid chain; its full sequence is Ribosomal RNA large subunit methyltransferase H (151 aa).

Residues leucine 73, glycine 100, and 119 to 124 (LSDLTM) contribute to the S-adenosyl-L-methionine site.

This sequence belongs to the RNA methyltransferase RlmH family. Homodimer.

The protein localises to the cytoplasm. It catalyses the reaction pseudouridine(1915) in 23S rRNA + S-adenosyl-L-methionine = N(3)-methylpseudouridine(1915) in 23S rRNA + S-adenosyl-L-homocysteine + H(+). In terms of biological role, specifically methylates the pseudouridine at position 1915 (m3Psi1915) in 23S rRNA. The chain is Ribosomal RNA large subunit methyltransferase H from Aliarcobacter butzleri (strain RM4018) (Arcobacter butzleri).